Here is a 263-residue protein sequence, read N- to C-terminus: Chromosomal replication initiator protein DnaA (263 aa).

A region of interest (domain I, interacts with DnaA modulators) is located at residue glutamate 1. Glutamate 1 is a region of interest (domain II). Positions 1-179 (ESGMGKTHLL…GSVSRLNFWS (179 aa)) are domain III, AAA+ region. ATP is bound by residues glycine 3, glycine 5, lysine 6, and threonine 7. Residues 180–263 (QQNPEEKIIT…HTLAQIGEEF (84 aa)) are domain IV, binds dsDNA.

The protein belongs to the DnaA family. As to quaternary structure, oligomerizes as a right-handed, spiral filament on DNA at oriC.

The protein localises to the cytoplasm. In terms of biological role, plays an essential role in the initiation and regulation of chromosomal replication. ATP-DnaA binds to the origin of replication (oriC) to initiate formation of the DNA replication initiation complex once per cell cycle. Binds the DnaA box (a 9 base pair repeat at the origin) and separates the double-stranded (ds)DNA. Forms a right-handed helical filament on oriC DNA; dsDNA binds to the exterior of the filament while single-stranded (ss)DNA is stabiized in the filament's interior. The ATP-DnaA-oriC complex binds and stabilizes one strand of the AT-rich DNA unwinding element (DUE), permitting loading of DNA polymerase. After initiation quickly degrades to an ADP-DnaA complex that is not apt for DNA replication. Binds acidic phospholipids. This chain is Chromosomal replication initiator protein DnaA, found in Mycoplasma mycoides.